The primary structure comprises 427 residues: Enolase (427 aa).

Gln163 contributes to the (2R)-2-phosphoglycerate binding site. Glu205 functions as the Proton donor in the catalytic mechanism. Residues Asp242, Glu285, and Asp312 each contribute to the Mg(2+) site. Residues Lys337, Arg366, Ser367, and Lys388 each contribute to the (2R)-2-phosphoglycerate site. Residue Lys337 is the Proton acceptor of the active site.

The protein belongs to the enolase family. Mg(2+) is required as a cofactor.

It localises to the cytoplasm. The protein localises to the secreted. Its subcellular location is the cell surface. It catalyses the reaction (2R)-2-phosphoglycerate = phosphoenolpyruvate + H2O. It functions in the pathway carbohydrate degradation; glycolysis; pyruvate from D-glyceraldehyde 3-phosphate: step 4/5. Catalyzes the reversible conversion of 2-phosphoglycerate (2-PG) into phosphoenolpyruvate (PEP). It is essential for the degradation of carbohydrates via glycolysis. The chain is Enolase from Leptothrix cholodnii (strain ATCC 51168 / LMG 8142 / SP-6) (Leptothrix discophora (strain SP-6)).